A 336-amino-acid polypeptide reads, in one-letter code: UPF0324 membrane protein lp_2841 (336 aa).

Transmembrane regions (helical) follow at residues 5–22, 26–48, 84–106, 116–138, 150–172, 204–226, 255–277, 282–304, and 311–333; these read GILP…ISQG, FVPA…NTFL, IGGF…ALWL, VRML…IAPV, ITLV…MAVF, TVQF…VLIF, WYVA…AIIG, TISS…LVNF, and LALY…ITLL.

The protein belongs to the UPF0324 family.

Its subcellular location is the cell membrane. This chain is UPF0324 membrane protein lp_2841, found in Lactiplantibacillus plantarum (strain ATCC BAA-793 / NCIMB 8826 / WCFS1) (Lactobacillus plantarum).